The chain runs to 1760 residues: Cilia- and flagella-associated protein 44 (1760 aa).

5 WD repeats span residues 119–160 (GATK…MVLR), 163–202 (CHNT…TGLK), 213–251 (LEIS…CCFA), 276–315 (CHEG…VAEG), and 388–427 (FNGG…ELYK). Over residues 1155-1165 (RQEEKLREQTA) the composition is skewed to basic and acidic residues. A disordered region spans residues 1155-1224 (RQEEKLREQT…FGTAAARTRS (70 aa)). Polar residues predominate over residues 1181–1190 (PATNTDTSGA). The segment covering 1194-1205 (ATRRSEGEDSRK) has biased composition (basic and acidic residues). Positions 1348–1389 (YDEARNSRDRCLREMEELQRLVQDQTASIEKLQEANKVFRRE) form a coiled coil. The tract at residues 1420–1444 (HSDMSGNDDDITSDDDDDDDMGEDE) is disordered. Residues 1425–1444 (GNDDDITSDDDDDDDMGEDE) show a composition bias toward acidic residues.

Belongs to the CFAP44 family.

The protein localises to the cell projection. It is found in the cilium. It localises to the flagellum. Its subcellular location is the cytoplasm. The protein resides in the cytoskeleton. The protein localises to the flagellum axoneme. Functionally, flagellar protein involved in flagellum axoneme organization and function. This is Cilia- and flagella-associated protein 44 from Trypanosoma brucei brucei (strain 927/4 GUTat10.1).